The primary structure comprises 930 residues: MSRRVRRKLEEEKGKDKVVVLPSYPETSISNEEDLVAPELLHGFVDWISLPYDTVLQLFTCLNYRDRASLASTCKTWRCLGASSCLWTSLDLRPHKFDASMAASLASRCVNLHYLRFRGVESADSLIHLKARNLIEVSGDYCKKITDATLSMIVARHEALESLQLGPDFCERITSDAIKAVAFCCPKLKKLRLSGIRDVTSEAIEALAKHCPQLNDLGFLDCLNIDEEALGKVVSVRYLSVAGTSNIKWSIASNNWDKLPKLTGLDVSRTDIGPTAVSRFLTSSQSLKVLCALNCHVLEEDESLISYNRFKGKVLLALFTNVFDGLASIFADNTKKPKDIFAYWRELMKTTKDKTINDFIHWIEWIISHTLLRTAECNPEGLDDFWLNEGAALLLNLMQSSQEDVQERSATGLATFVVVDDENASIDCGRAEAVMKDGGIRLLLELAKSWREGLQSEAAKAIANLSVNANIAKSVAEEGGIKILAGLAKSMNRLVAEEAAGGLWNLSVGEEHKNAIAQAGGVKALVDLIFRWPNGCDGVLERAAGALANLAADDKCSMEVAKAGGVHALVMLARNCKYEGVQEQAARALANLAAHGDSNNNNAAVGQEAGALEALVQLTKSPHEGVRQEAAGALWNLSFDDKNRESISVAGGVEALVALAQSCSNASTGLQERAAGALWGLSVSEANSVAIGREGGVPPLIALARSEAEDVHETAAGALWNLAFNPGNALRIVEEGGVPALVHLCSSSVSKMARFMAALALAYMFDGRMDEYALMIGTSSSESTSKNISLDGARNMALKHIEAFVLSFIDPHIFESPVVSSTPTMLAQVTERARIQEAGHLRCSGAEIGRFVTMLRNPDSTLKACAAFALLQFTIPGGRHAMHHVSLMQNGGESRFLRSAAASAKTPREAKIFTKILLRNLEHHQAESSI.

The Nuclear localization signal motif lies at 3–8 (RRVRRK). Residues 44–90 (FVDWISLPYDTVLQLFTCLNYRDRASLASTCKTWRCLGASSCLWTSL) enclose the F-box domain. ARM repeat units lie at residues 172–212 (RITS…KHCP), 244–285 (TSNI…TSSQ), 379–418 (PEGL…TFVV), 428–467 (CGRA…NLSV), 469–508 (ANIA…NLSV), 510–552 (EEHK…NLAA), 554–594 (DKCS…NLAA), 600–639 (NNNA…NLSF), 641–683 (DKNR…GLSV), 685–724 (EANS…NLAF), 726–766 (PGNA…YMFD), 790–831 (LDGA…QVTE), and 835–875 (IQEA…QFTI).

This sequence belongs to the beta-catenin family. Interacts with SNL1. Interacts with MYB53, MYB92 and MYB93. Expressed ubiquitously, with higher levels in root tip, pericycle and vasculature.

It localises to the nucleus. Its function is as follows. Promotes lateral root initiation and development, independently of auxin (IAA) and abscisis acid (ABA). The chain is Protein ARABIDILLO 1 (FBX5) from Arabidopsis thaliana (Mouse-ear cress).